The chain runs to 379 residues: Cathepsin B-like protease 1 (379 aa).

The first 30 residues, 1–30 (MADSCCIRLHLLASVFLLLFSSFNLQGIAA), serve as a signal peptide directing secretion. The propeptide at 31–102 (ENLSKQKLTS…PIVRHDLSLK (72 aa)) is activation peptide. Residues asparagine 32 and asparagine 69 are each glycosylated (N-linked (GlcNAc...) asparagine). Cystine bridges form between cysteine 116-cysteine 165, cysteine 148-cysteine 191, cysteine 182-cysteine 236, cysteine 183-cysteine 187, cysteine 213-cysteine 240, and cysteine 222-cysteine 227. Cysteine 151 is a catalytic residue. Residue asparagine 171 is glycosylated (N-linked (GlcNAc...) asparagine). Active-site residues include histidine 306 and asparagine 327. Asparagine 330 carries N-linked (GlcNAc...) asparagine glycosylation. Residues 363 to 379 (NVFKGITTSDDLLVSSV) constitute a propeptide, removed in mature form.

This sequence belongs to the peptidase C1 family.

Thiol protease that plays a central role in plant programmed cell death (PCD). In addition to its role in protein degradation, may cleave and/or degrade a number of target proteins, activating signaling towards PCD. Contributes to the increase of caspase-3-like activity after UV-C-induced PCD and is required for abiotic stress-induced PCD. Functions redundantly with CATHB2 and CATHB3 in basal defense and distinct forms of plant programmed cell death (PCD). Participates in the establishment of basal resistance against the bacterial pathogen Pseudomonase syringae pv. tomato DC3000. Required for full levels of PCD during resistance (R) gene-mediated hypersensitive response (HR). Involved in the regulation of senescence, a developmental form of PCD in plants. The chain is Cathepsin B-like protease 1 from Arabidopsis thaliana (Mouse-ear cress).